Consider the following 1333-residue polypeptide: DNA-directed RNA polymerase subunit beta' (1333 aa).

Zn(2+) is bound by residues C60, C62, C75, and C78. Residues D535, D537, and D539 each coordinate Mg(2+). The Zn(2+) site is built by C901, C983, C990, and C993.

It belongs to the RNA polymerase beta' chain family. As to quaternary structure, the RNAP catalytic core consists of 2 alpha, 1 beta, 1 beta' and 1 omega subunit. When a sigma factor is associated with the core the holoenzyme is formed, which can initiate transcription. Requires Mg(2+) as cofactor. The cofactor is Zn(2+).

It carries out the reaction RNA(n) + a ribonucleoside 5'-triphosphate = RNA(n+1) + diphosphate. DNA-dependent RNA polymerase catalyzes the transcription of DNA into RNA using the four ribonucleoside triphosphates as substrates. The sequence is that of DNA-directed RNA polymerase subunit beta' from Corynebacterium glutamicum (strain R).